Consider the following 157-residue polypeptide: Arginine repressor (157 aa).

Belongs to the ArgR family.

The protein resides in the cytoplasm. It functions in the pathway amino-acid biosynthesis; L-arginine biosynthesis [regulation]. Regulates arginine biosynthesis genes. The polypeptide is Arginine repressor (Bacteroides fragilis (strain ATCC 25285 / DSM 2151 / CCUG 4856 / JCM 11019 / LMG 10263 / NCTC 9343 / Onslow / VPI 2553 / EN-2)).